The primary structure comprises 109 residues: Phosphoribosyl-ATP pyrophosphatase (109 aa).

The protein belongs to the PRA-PH family.

Its subcellular location is the cytoplasm. The catalysed reaction is 1-(5-phospho-beta-D-ribosyl)-ATP + H2O = 1-(5-phospho-beta-D-ribosyl)-5'-AMP + diphosphate + H(+). It participates in amino-acid biosynthesis; L-histidine biosynthesis; L-histidine from 5-phospho-alpha-D-ribose 1-diphosphate: step 2/9. The protein is Phosphoribosyl-ATP pyrophosphatase of Marinobacter nauticus (strain ATCC 700491 / DSM 11845 / VT8) (Marinobacter aquaeolei).